The following is a 405-amino-acid chain: L-rhamnonate dehydratase (405 aa).

Substrate contacts are provided by H33 and R59. 3 residues coordinate Mg(2+): D226, E252, and E280. The active-site Proton acceptor is the H329. E349 contacts substrate.

The protein belongs to the mandelate racemase/muconate lactonizing enzyme family. RhamD subfamily. Homooctamer; tetramer of dimers. Mg(2+) is required as a cofactor.

It catalyses the reaction L-rhamnonate = 2-dehydro-3-deoxy-L-rhamnonate + H2O. In terms of biological role, catalyzes the dehydration of L-rhamnonate to 2-keto-3-deoxy-L-rhamnonate (KDR). This Escherichia coli (strain SMS-3-5 / SECEC) protein is L-rhamnonate dehydratase.